Here is a 569-residue protein sequence, read N- to C-terminus: Nucleoprotein (569 aa).

Positions 54–241 (MRKERRDDND…IDTKKSSLNI (188 aa)) are binding site for the cap structure m7GTP. Mn(2+) is bound by residues Asp-389 and Glu-391. Zn(2+) is bound by residues Glu-399, Cys-506, His-509, and Cys-529. Asp-533 is a Mn(2+) binding site.

It belongs to the arenaviridae nucleocapsid protein family. In terms of assembly, homomultimerizes to form the nucleocapsid. Binds to viral genomic RNA. Interacts with glycoprotein G2. Interacts with protein Z; this interaction probably directs the encapsidated genome to budding sites. Interacts with protein L; this interaction does not interfere with Z-L interaction. Interacts with host IKBKE (via Protein kinase domain); the interaction inhibits IKBKE kinase activity.

It localises to the virion. Its subcellular location is the host cytoplasm. Encapsidates the genome, protecting it from nucleases. The encapsidated genomic RNA is termed the nucleocapsid (NC). Serves as template for viral transcription and replication. The increased presence of protein N in host cell does not seem to trigger the switch from transcription to replication as observed in other negative strain RNA viruses. Through the interaction with host IKBKE, strongly inhibits the phosphorylation and nuclear translocation of host IRF3, a protein involved in interferon activation pathway, leading to the inhibition of interferon-beta and IRF3-dependent promoters activation. Also encodes a functional 3'-5' exoribonuclease that degrades preferentially dsRNA substrates and thereby participates in the suppression of interferon induction. This chain is Nucleoprotein, found in Lassa virus (strain Mouse/Sierra Leone/Josiah/1976) (LASV).